Here is a 338-residue protein sequence, read N- to C-terminus: DNA-directed RNA polymerase subunit alpha (338 aa).

The interval 1–234 (MIHKNWAELI…DQLSIFVNFE (234 aa)) is alpha N-terminal domain (alpha-NTD). The alpha C-terminal domain (alpha-CTD) stretch occupies residues 250-338 (FNPLLLKKVD…DLAKRFEDQF (89 aa)).

It belongs to the RNA polymerase alpha chain family. Homodimer. The RNAP catalytic core consists of 2 alpha, 1 beta, 1 beta' and 1 omega subunit. When a sigma factor is associated with the core the holoenzyme is formed, which can initiate transcription.

It carries out the reaction RNA(n) + a ribonucleoside 5'-triphosphate = RNA(n+1) + diphosphate. Functionally, DNA-dependent RNA polymerase catalyzes the transcription of DNA into RNA using the four ribonucleoside triphosphates as substrates. The sequence is that of DNA-directed RNA polymerase subunit alpha from Cereibacter sphaeroides (strain ATCC 17029 / ATH 2.4.9) (Rhodobacter sphaeroides).